A 319-amino-acid chain; its full sequence is tRNA uridine(34) hydroxylase (319 aa).

The Rhodanese domain occupies 127–221 (KQEDTVIIDA…YGKDPEVQGE (95 aa)). Cys-181 (cysteine persulfide intermediate) is an active-site residue.

This sequence belongs to the TrhO family.

The catalysed reaction is uridine(34) in tRNA + AH2 + O2 = 5-hydroxyuridine(34) in tRNA + A + H2O. Functionally, catalyzes oxygen-dependent 5-hydroxyuridine (ho5U) modification at position 34 in tRNAs. The protein is tRNA uridine(34) hydroxylase of Bacillus cereus (strain AH187).